A 240-amino-acid polypeptide reads, in one-letter code: Enolase-phosphatase E1 (240 aa).

Belongs to the HAD-like hydrolase superfamily. MasA/MtnC family. As to quaternary structure, monomer. Mg(2+) serves as cofactor.

The catalysed reaction is 5-methylsulfanyl-2,3-dioxopentyl phosphate + H2O = 1,2-dihydroxy-5-(methylsulfanyl)pent-1-en-3-one + phosphate. Its pathway is amino-acid biosynthesis; L-methionine biosynthesis via salvage pathway; L-methionine from S-methyl-5-thio-alpha-D-ribose 1-phosphate: step 3/6. The protein operates within amino-acid biosynthesis; L-methionine biosynthesis via salvage pathway; L-methionine from S-methyl-5-thio-alpha-D-ribose 1-phosphate: step 4/6. Functionally, bifunctional enzyme that catalyzes the enolization of 2,3-diketo-5-methylthiopentyl-1-phosphate (DK-MTP-1-P) into the intermediate 2-hydroxy-3-keto-5-methylthiopentenyl-1-phosphate (HK-MTPenyl-1-P), which is then dephosphorylated to form the acireductone 1,2-dihydroxy-3-keto-5-methylthiopentene (DHK-MTPene). This Saccharopolyspora erythraea (strain ATCC 11635 / DSM 40517 / JCM 4748 / NBRC 13426 / NCIMB 8594 / NRRL 2338) protein is Enolase-phosphatase E1.